Reading from the N-terminus, the 317-residue chain is Probable deoxyhypusine synthase 1 (317 aa).

K285 (nucleophile) is an active-site residue.

Belongs to the deoxyhypusine synthase family. NAD(+) is required as a cofactor.

The enzyme catalyses [eIF5A protein]-L-lysine + spermidine = [eIF5A protein]-deoxyhypusine + propane-1,3-diamine. It functions in the pathway protein modification; eIF5A hypusination. Its function is as follows. Catalyzes the NAD-dependent oxidative cleavage of spermidine and the subsequent transfer of the butylamine moiety of spermidine to the epsilon-amino group of a specific lysine residue of the eIF-5A precursor protein to form the intermediate deoxyhypusine residue. The chain is Probable deoxyhypusine synthase 1 (dys1) from Methanosarcina mazei (strain ATCC BAA-159 / DSM 3647 / Goe1 / Go1 / JCM 11833 / OCM 88) (Methanosarcina frisia).